Reading from the N-terminus, the 127-residue chain is Large ribosomal subunit protein uL24 (127 aa).

Belongs to the universal ribosomal protein uL24 family. Part of the 50S ribosomal subunit.

One of two assembly initiator proteins, it binds directly to the 5'-end of the 23S rRNA, where it nucleates assembly of the 50S subunit. Its function is as follows. One of the proteins that surrounds the polypeptide exit tunnel on the outside of the subunit. The sequence is that of Large ribosomal subunit protein uL24 from Leptospira biflexa serovar Patoc (strain Patoc 1 / ATCC 23582 / Paris).